The sequence spans 104 residues: uncharacterized protein (104 aa).

This is an uncharacterized protein from Invertebrate iridescent virus 3 (IIV-3).